A 335-amino-acid chain; its full sequence is Anthranilate phosphoribosyltransferase (335 aa).

Residues glycine 79, 82–83, threonine 87, 89–92, 107–115, and serine 119 each bind 5-phospho-alpha-D-ribose 1-diphosphate; these read GD, NVST, and KHCNKGVSS. Glycine 79 is a binding site for anthranilate. Serine 91 provides a ligand contact to Mg(2+). Asparagine 110 is an anthranilate binding site. Residue arginine 165 coordinates anthranilate. Residues aspartate 223 and glutamate 224 each coordinate Mg(2+).

It belongs to the anthranilate phosphoribosyltransferase family. Homodimer. Mg(2+) is required as a cofactor.

The catalysed reaction is N-(5-phospho-beta-D-ribosyl)anthranilate + diphosphate = 5-phospho-alpha-D-ribose 1-diphosphate + anthranilate. It functions in the pathway amino-acid biosynthesis; L-tryptophan biosynthesis; L-tryptophan from chorismate: step 2/5. Catalyzes the transfer of the phosphoribosyl group of 5-phosphorylribose-1-pyrophosphate (PRPP) to anthranilate to yield N-(5'-phosphoribosyl)-anthranilate (PRA). The protein is Anthranilate phosphoribosyltransferase of Buchnera aphidicola subsp. Schizaphis graminum (strain Sg).